Reading from the N-terminus, the 137-residue chain is Large ribosomal subunit protein uL16 (137 aa).

A compositionally biased stretch (basic residues) spans 1–17; the sequence is MLQPKRTKFRKTHKGRN. The segment at 1–24 is disordered; sequence MLQPKRTKFRKTHKGRNRGLANTG.

This sequence belongs to the universal ribosomal protein uL16 family. As to quaternary structure, part of the 50S ribosomal subunit.

Its function is as follows. Binds 23S rRNA and is also seen to make contacts with the A and possibly P site tRNAs. The chain is Large ribosomal subunit protein uL16 from Aeromonas salmonicida (strain A449).